The chain runs to 201 residues: Ribosome maturation factor RimP (201 aa).

It belongs to the RimP family.

The protein resides in the cytoplasm. In terms of biological role, required for maturation of 30S ribosomal subunits. The protein is Ribosome maturation factor RimP of Acidobacterium capsulatum (strain ATCC 51196 / DSM 11244 / BCRC 80197 / JCM 7670 / NBRC 15755 / NCIMB 13165 / 161).